The primary structure comprises 295 residues: Aquaporin-9 (295 aa).

Residues 1–24 (MPSEKDGAKKSLMQRLALKSRIAK) are Cytoplasmic-facing. Residues 25–43 (ETLSEFLGTFIMIVLGCSS) traverse the membrane as a helical segment. The Extracellular portion of the chain corresponds to 44–57 (IAQAVLSRERFGGI). A helical membrane pass occupies residues 58 to 77 (ITINIGFASAVVMALYVTFG). The Cytoplasmic portion of the chain corresponds to 78 to 79 (IS). Residues 80–92 (GGHINPAVSFAMC) constitute an intramembrane region (discontinuously helical). Residues 84–86 (NPA) carry the NPA 1 motif. Residues 93–98 (AFGRME) are Cytoplasmic-facing. Residues 99-123 (WFKFPFYVGAQFLGAFVGAATVFGI) form a helical membrane-spanning segment. Topologically, residues 124-160 (YYDGLMAFAGGKLLVVGENATAFIFATYPAPFISTPG) are extracellular. Residues 161-178 (AFVDQVVSTMFLLLIVFA) form a helical membrane-spanning segment. The Cytoplasmic portion of the chain corresponds to 179–190 (MFDSRNLGVPRG). The helical transmembrane segment at 191–207 (LEPVVIGLLIIVLSCSL) threads the bilayer. Residues 208 to 210 (GLN) are Extracellular-facing. Residues 211–225 (SGCAMNPARDLSPRL) constitute an intramembrane region (discontinuously helical). The short motif at 216-218 (NPA) is the NPA 2 element. The Extracellular portion of the chain corresponds to 226 to 243 (FTALAGWGFEVFTVGNNF). A helical transmembrane segment spans residues 244–264 (WWIPVVGPMIGAFLGGLIYIL). Residues 265 to 295 (FIQMHHSKLDPDMKAEPSENNLEKHELSVIM) are Cytoplasmic-facing.

It belongs to the MIP/aquaporin (TC 1.A.8) family. Homotetramer; each monomer provides an independent glycerol/water pore. Detected in testis and liver. Detected in immature spermatocytes and in interstitial Leydig cells.

It localises to the cell membrane. It is found in the basolateral cell membrane. The catalysed reaction is H2O(in) = H2O(out). It carries out the reaction glycerol(in) = glycerol(out). The enzyme catalyses urea(in) = urea(out). It catalyses the reaction (S)-lactate(in) = (S)-lactate(out). The catalysed reaction is NH4(+)(in) = NH4(+)(out). It carries out the reaction uracil(in) = uracil(out). The enzyme catalyses adenine(out) = adenine(in). It catalyses the reaction 3-hydroxybutanoate(in) = 3-hydroxybutanoate(out). The catalysed reaction is D-sorbitol(in) = D-sorbitol(out). It carries out the reaction D-mannitol(in) = D-mannitol(out). The enzyme catalyses H2O2(out) = H2O2(in). It catalyses the reaction arsenite(in) = arsenite(out). The catalysed reaction is selenite(in) = selenite(out). With respect to regulation, channel activity is inhibited by mercury ions and phloretin. In terms of biological role, aquaglyceroporins form homotetrameric transmembrane channels, with each monomer independently mediating glycerol and water transport across the plasma membrane along their osmotic gradient. AQP9 is the primary route for glycerol uptake in hepatocytes, supporting hepatic gluconeogenesis. It exhibits broad specificity and may transport various small, non-charged solutes, including carbamides, polyols, purines, and pyrimidines. AQP9 may also facilitate hepatic urea extrusion. Due to its permeability to lactate, AQP9 might participate in the astrocyte-to-neuron lactate shuttle, supplying neurons with energy. Additionally, AQP9 is permeable to arsenite, contributing to arsenic excretion by the liver and providing partial protection against arsenic toxicity. It is also permeable to H2O2 in vivo. Could also be permeable to ammonium. In Rattus norvegicus (Rat), this protein is Aquaporin-9.